Consider the following 164-residue polypeptide: Peptidyl-prolyl cis-trans isomerase A-like 4H (164 aa).

In terms of domain architecture, PPIase cyclophilin-type spans 7–163 (FFDITVDGKP…KKITIADCGQ (157 aa)). Asn-71 and Asn-108 each carry an N-linked (GlcNAc...) asparagine glycan.

This sequence belongs to the cyclophilin-type PPIase family. PPIase A subfamily.

The protein localises to the cytoplasm. The enzyme catalyses [protein]-peptidylproline (omega=180) = [protein]-peptidylproline (omega=0). In terms of biological role, PPIases accelerate the folding of proteins. It catalyzes the cis-trans isomerization of proline imidic peptide bonds in oligopeptides. The protein is Peptidyl-prolyl cis-trans isomerase A-like 4H of Homo sapiens (Human).